The chain runs to 580 residues: Ran GTPase-activating protein 1 (580 aa).

LRR repeat units follow at residues 48–71 (YEGLQALRLEGNTVGVEAAKAIAE), 111–134 (GAQLTELDLSDNAFGPDGVRGFEA), 141–168 (CFTLQELKLNNCGMGIGGGKILAAALTE), 207–230 (IGTLEEVHMPQNGINHAGITALAE), 235–258 (NSLLKVINLNDNTFTEKGGVAMAE), 292–315 (LHKLKDLNLSYCEIKADAAVSLAE), and 320–343 (KSDLEKLDLNGNCLGEEGCEQVQE). Residues 356–429 (SLSDDEDEDD…PPKLPVDAST (74 aa)) are disordered. Residues 358–399 (SDDEDEDDDDDDEDDDDDEDDENDDEEVEEEEEEVEEEEGGD) are compositionally biased toward acidic residues.

Belongs to the RNA1 family. Homodimer. Identified in a complex with RANBP2 and the ubiquitin-conjugating enzyme E2 (UBE2I). In terms of processing, may be sumoylated.

The protein localises to the cytoplasm. It is found in the nucleus. It localises to the nucleoplasm. The protein resides in the nucleus envelope. Its subcellular location is the chromosome. The protein localises to the centromere. It is found in the kinetochore. It localises to the cytoskeleton. The protein resides in the spindle. In terms of biological role, GTPase activator for RAN, converting it to the GDP-bound state. Converts cytoplasmic GTP-bound RAN to GDP-bound RAN, which is required for RAN-mediated nuclear import and export. This is Ran GTPase-activating protein 1 (rangap1) from Xenopus laevis (African clawed frog).